The chain runs to 51 residues: Large ribosomal subunit protein eL40 (51 aa).

Zn(2+) contacts are provided by Cys17, Cys20, Cys31, and Cys34.

Belongs to the eukaryotic ribosomal protein eL40 family. Part of the 50S ribosomal subunit. Requires Zn(2+) as cofactor.

This Thermococcus kodakarensis (strain ATCC BAA-918 / JCM 12380 / KOD1) (Pyrococcus kodakaraensis (strain KOD1)) protein is Large ribosomal subunit protein eL40.